Here is a 555-residue protein sequence, read N- to C-terminus: MDIKRTILWVIFSMSLVLLYDNWQRANGHASMFFPSATQQQAASAPAASAAQGDVPKANATAGAAAPAAPGGAPQAAAQPTGEKIIVTTDEVRAEIDTAGGILSRLELLNEHEKDGKPVVLFERDTTRTYMARSGLIGGDLPNHTTVFTATPGPRTLDGADKLEVTLTADKNGVKFVKTYVFHKGSYVVDARFAVTNDGTAPVSPTLYMELARDGSKVEQSQFYSTFTGPAIYTDADKYHKITFDDIAKGKASTPAATTSGWVAMVQHYFASAWIPQAGKEHSFYVQQIDPNLYRVGIQQPLGQIAPGATVTTDARLFAGPQEERMLEKITPGLELVKDYGWLTILAKPLFWLLEKLHGFLNNWGWSIIALTVLIKLVFFPLSAASYKSMGKMKDLQPRMTSIRERHKGDPQKMNAEMMALYKTEKVNPLGGCLPIVIQIPVFIALYWVLLSSVEMRGAPWLGWIHDLSVPDPFYILPIVMAVSMFVQTRLNPTPPDPVQAKVMMIMPLVFSFMFFFFPAGLVLYWVVNNILSIAQQWQINRMLGKGKTAAVAKS.

Residues I7–Q24 form a helical membrane-spanning segment. Residues T61–T81 are disordered. The next 5 membrane-spanning stretches (helical) occupy residues G341–L361, W364–A384, L430–L450, L468–Q488, and V503–V523.

It belongs to the OXA1/ALB3/YidC family. Type 1 subfamily. As to quaternary structure, interacts with the Sec translocase complex via SecD. Specifically interacts with transmembrane segments of nascent integral membrane proteins during membrane integration.

Its subcellular location is the cell inner membrane. Its function is as follows. Required for the insertion and/or proper folding and/or complex formation of integral membrane proteins into the membrane. Involved in integration of membrane proteins that insert both dependently and independently of the Sec translocase complex, as well as at least some lipoproteins. Aids folding of multispanning membrane proteins. This is Membrane protein insertase YidC from Cupriavidus pinatubonensis (strain JMP 134 / LMG 1197) (Cupriavidus necator (strain JMP 134)).